Consider the following 270-residue polypeptide: Oxidized low-density lipoprotein receptor 1 (270 aa).

The segment covering 1–14 has biased composition (basic and acidic residues); that stretch reads MTVDDPKGMKDQLD. Positions 1–22 are disordered; the sequence is MTVDDPKGMKDQLDQKPNGKTA. Topologically, residues 1–33 are cytoplasmic; it reads MTVDDPKGMKDQLDQKPNGKTAKGFVSSWRWYP. The chain crosses the membrane as a helical; Signal-anchor for type II membrane protein span at residues 34–56; the sequence is AAVTLGVLCLGLLVTVILLILQL. A lipid anchor (S-palmitoyl cysteine) is attached at C42. The segment at 57 to 146 is neck; that stretch reads SQVSDLIKKQ…SGPCPQDWLW (90 aa). Over 57-270 the chain is Extracellular; that stretch reads SQVSDLIKKQ…QKKANLLRAQ (214 aa). N-linked (GlcNAc...) asparagine glycosylation is found at N69 and N135. The stretch at 85–135 forms a coiled coil; that stretch reads RRSEKSAQESQKELKEMIETLAHKLDEKSKKLMELHRQNLNLQEVLKEAAN. Cystine bridges form between C140/C151, C168/C260, and C239/C252. Positions 147 to 261 constitute a C-type lectin domain; it reads HEENCYQFSS…CILTAFSICQ (115 aa).

Homodimer; disulfide-linked. May form a hexamer composed of 3 homodimers. Interacts with HSP70. Post-translationally, N-glycosylated. Highly expressed in endothelial cells, aortic intima and lung. Expressed at low level in other tissues.

The protein localises to the cell membrane. It is found in the membrane raft. It localises to the secreted. In terms of biological role, receptor that mediates the recognition, internalization and degradation of oxidatively modified low density lipoprotein (oxLDL) by vascular endothelial cells. OxLDL is a marker of atherosclerosis that induces vascular endothelial cell activation and dysfunction, resulting in pro-inflammatory responses, pro-oxidative conditions and apoptosis. Its association with oxLDL induces the activation of NF-kappa-B through an increased production of intracellular reactive oxygen and a variety of pro-atherogenic cellular responses including a reduction of nitric oxide (NO) release, monocyte adhesion and apoptosis. In addition to binding oxLDL, it acts as a receptor for the HSP70 protein involved in antigen cross-presentation to naive T-cells in dendritic cells, thereby participating in cell-mediated antigen cross-presentation. Also involved in inflammatory process, by acting as a leukocyte-adhesion molecule at the vascular interface in endotoxin-induced inflammation. Also acts as a receptor for advanced glycation end (AGE) products, activated platelets, monocytes, apoptotic cells and both Gram-negative and Gram-positive bacteria. The polypeptide is Oxidized low-density lipoprotein receptor 1 (OLR1) (Bos taurus (Bovine)).